We begin with the raw amino-acid sequence, 644 residues long: Biosynthetic arginine decarboxylase (644 aa).

Position 100 is an N6-(pyridoxal phosphate)lysine (lysine 100). Cysteine 282–tyrosine 292 contacts substrate.

The protein belongs to the Orn/Lys/Arg decarboxylase class-II family. SpeA subfamily. Mg(2+) is required as a cofactor. Pyridoxal 5'-phosphate serves as cofactor.

The catalysed reaction is L-arginine + H(+) = agmatine + CO2. Functionally, catalyzes the biosynthesis of agmatine from arginine. In Gloeobacter violaceus (strain ATCC 29082 / PCC 7421), this protein is Biosynthetic arginine decarboxylase.